Reading from the N-terminus, the 275-residue chain is uncharacterized protein (275 aa).

Residues 20–22, 41–42, 80–81, and Asn107 contribute to the NAD(+) site; these read RGQ, DI, and DV. Ser160 provides a ligand contact to substrate. Catalysis depends on Tyr173, which acts as the Proton acceptor. Residues Lys177 and 206 to 208 each bind NAD(+); that span reads VET.

Belongs to the short-chain dehydrogenases/reductases (SDR) family.

This is an uncharacterized protein from Mycolicibacterium paratuberculosis (strain ATCC BAA-968 / K-10) (Mycobacterium paratuberculosis).